Consider the following 133-residue polypeptide: Bacteriohemerythrin (133 aa).

Fe cation contacts are provided by H19, H56, E60, H75, H79, H115, and D120.

This sequence belongs to the hemerythrin family. In terms of assembly, monomer.

Functionally, oxygen-binding protein. May be involved in a storage mechanism or for delivery to oxygen-requiring enzymes. The oxygen-binding site contains two iron atoms. The protein is Bacteriohemerythrin of Campylobacter jejuni subsp. jejuni serotype O:23/36 (strain 81-176).